Here is a 544-residue protein sequence, read N- to C-terminus: Sphingosine-1-phosphate lyase (544 aa).

Topologically, residues 1 to 29 are lumenal; sequence MDSFSYSSMKSMLIQARGSLNSRLSEFEP. Residues 30 to 50 traverse the membrane as a helical; Signal-anchor for type III membrane protein segment; sequence LVLLLVPLVSLFLAQIIGSVF. Topologically, residues 51–544 are cytoplasmic; the sequence is GVVHEKGLKA…LLVSFMDSQY (494 aa). Lys-349 carries the post-translational modification N6-(pyridoxal phosphate)lysine.

Belongs to the group II decarboxylase family. Sphingosine-1-phosphate lyase subfamily. Requires pyridoxal 5'-phosphate as cofactor. Expressed in the peripheral parts of leaves and the bases of trichomes.

The protein localises to the endoplasmic reticulum membrane. It carries out the reaction sphinganine 1-phosphate = hexadecanal + phosphoethanolamine. The protein operates within lipid metabolism; sphingolipid metabolism. Functionally, cleaves phosphorylated sphingoid bases (PSBs), such as sphingosine-1-phosphate, into fatty aldehydes and phosphoethanolamine. May play a minor role in maintenance of sphingolipid metabolism during normal plant development and growth, but be required for maintaining sphingoid long chain bases (LCB) and their phosphorylated derivatives (LCB-P) levels when sphingolipid metabolism is perturbed. May play a role in dehydration stress. This Arabidopsis thaliana (Mouse-ear cress) protein is Sphingosine-1-phosphate lyase (DPL1).